Reading from the N-terminus, the 475-residue chain is Aspartyl/glutamyl-tRNA(Asn/Gln) amidotransferase subunit B (475 aa).

The protein belongs to the GatB/GatE family. GatB subfamily. As to quaternary structure, heterotrimer of A, B and C subunits.

It carries out the reaction L-glutamyl-tRNA(Gln) + L-glutamine + ATP + H2O = L-glutaminyl-tRNA(Gln) + L-glutamate + ADP + phosphate + H(+). The catalysed reaction is L-aspartyl-tRNA(Asn) + L-glutamine + ATP + H2O = L-asparaginyl-tRNA(Asn) + L-glutamate + ADP + phosphate + 2 H(+). Its function is as follows. Allows the formation of correctly charged Asn-tRNA(Asn) or Gln-tRNA(Gln) through the transamidation of misacylated Asp-tRNA(Asn) or Glu-tRNA(Gln) in organisms which lack either or both of asparaginyl-tRNA or glutaminyl-tRNA synthetases. The reaction takes place in the presence of glutamine and ATP through an activated phospho-Asp-tRNA(Asn) or phospho-Glu-tRNA(Gln). The chain is Aspartyl/glutamyl-tRNA(Asn/Gln) amidotransferase subunit B from Staphylococcus aureus (strain MRSA252).